The sequence spans 97 residues: UPF0235 protein PFL_5841 (97 aa).

The protein belongs to the UPF0235 family.

This chain is UPF0235 protein PFL_5841, found in Pseudomonas fluorescens (strain ATCC BAA-477 / NRRL B-23932 / Pf-5).